A 307-amino-acid chain; its full sequence is GTPase Era (307 aa).

The 170-residue stretch at 17–186 (RCGFVAIVGR…LELLKPYLPE (170 aa)) folds into the Era-type G domain. The tract at residues 25-32 (GRPNVGKS) is G1. 25–32 (GRPNVGKS) is a binding site for GTP. Residues 51-55 (QTTRN) are G2. The segment at 72–75 (DTPG) is G3. GTP contacts are provided by residues 72 to 76 (DTPGF) and 133 to 136 (NKID). The tract at residues 133-136 (NKID) is G4. A G5 region spans residues 165-167 (VSA). One can recognise a KH type-2 domain in the interval 217–293 (LGEELPYAMN…FLKVWVKVKS (77 aa)).

It belongs to the TRAFAC class TrmE-Era-EngA-EngB-Septin-like GTPase superfamily. Era GTPase family. In terms of assembly, monomer.

Its subcellular location is the cytoplasm. The protein localises to the cell inner membrane. An essential GTPase that binds both GDP and GTP, with rapid nucleotide exchange. Plays a role in 16S rRNA processing and 30S ribosomal subunit biogenesis and possibly also in cell cycle regulation and energy metabolism. This chain is GTPase Era, found in Neisseria meningitidis serogroup C / serotype 2a (strain ATCC 700532 / DSM 15464 / FAM18).